Reading from the N-terminus, the 491-residue chain is Alpha-2-antiplasmin (491 aa).

Positions 1–27 (MALLRGLLVLSLSCLQGPCFTFSPVSA) are cleaved as a signal peptide. The propeptide occupies 28 to 39 (VDLPGQQPVSEQ). Residues C70 and C143 are joined by a disulfide bond. 4 N-linked (GlcNAc...) asparagine glycosylation sites follow: N126, N295, N309, and N316. Positions 439–491 (SALPQLQEQRDSPDNRLIGQNDKADFHGGKTFGPDLKLAPRMEEDYPQFSSPK) are disordered. A Sulfotyrosine modification is found at Y484.

The protein belongs to the serpin family. Forms protease inhibiting heterodimer with TMPRSS7. Post-translationally, proteolytically cleaved at Pro-35 by both the prolyl endopeptidase FAP form and antiplasmin-cleaving enzyme FAP soluble form to generate mature alpha-2-antiplasmin. As to expression, expressed by the liver and secreted in plasma.

It localises to the secreted. Serine protease inhibitor. The major targets of this inhibitor are plasmin and trypsin, but it also inactivates matriptase-3/TMPRSS7 and chymotrypsin. This is Alpha-2-antiplasmin (Serpinf2) from Mus musculus (Mouse).